The primary structure comprises 346 residues: Holliday junction branch migration complex subunit RuvB (346 aa).

Residues 1 to 182 are large ATPase domain (RuvB-L); sequence MTRVISGEPQ…FGIPIRLEFY (182 aa). Leucine 21, arginine 22, glycine 63, lysine 66, threonine 67, threonine 68, arginine 172, tyrosine 182, and arginine 219 together coordinate ATP. Threonine 67 is a Mg(2+) binding site. The segment at 183–253 is small ATPAse domain (RuvB-S); the sequence is TPAELRHVLQ…AAAMALARLE (71 aa). The segment at 256 to 346 is head domain (RuvB-H); it reads ESGLDSLDRR…QAQGALFDEG (91 aa). 3 residues coordinate DNA: arginine 292, arginine 311, and arginine 316.

This sequence belongs to the RuvB family. As to quaternary structure, homohexamer. Forms an RuvA(8)-RuvB(12)-Holliday junction (HJ) complex. HJ DNA is sandwiched between 2 RuvA tetramers; dsDNA enters through RuvA and exits via RuvB. An RuvB hexamer assembles on each DNA strand where it exits the tetramer. Each RuvB hexamer is contacted by two RuvA subunits (via domain III) on 2 adjacent RuvB subunits; this complex drives branch migration. In the full resolvosome a probable DNA-RuvA(4)-RuvB(12)-RuvC(2) complex forms which resolves the HJ.

It is found in the cytoplasm. The enzyme catalyses ATP + H2O = ADP + phosphate + H(+). Its function is as follows. The RuvA-RuvB-RuvC complex processes Holliday junction (HJ) DNA during genetic recombination and DNA repair, while the RuvA-RuvB complex plays an important role in the rescue of blocked DNA replication forks via replication fork reversal (RFR). RuvA specifically binds to HJ cruciform DNA, conferring on it an open structure. The RuvB hexamer acts as an ATP-dependent pump, pulling dsDNA into and through the RuvAB complex. RuvB forms 2 homohexamers on either side of HJ DNA bound by 1 or 2 RuvA tetramers; 4 subunits per hexamer contact DNA at a time. Coordinated motions by a converter formed by DNA-disengaged RuvB subunits stimulates ATP hydrolysis and nucleotide exchange. Immobilization of the converter enables RuvB to convert the ATP-contained energy into a lever motion, pulling 2 nucleotides of DNA out of the RuvA tetramer per ATP hydrolyzed, thus driving DNA branch migration. The RuvB motors rotate together with the DNA substrate, which together with the progressing nucleotide cycle form the mechanistic basis for DNA recombination by continuous HJ branch migration. Branch migration allows RuvC to scan DNA until it finds its consensus sequence, where it cleaves and resolves cruciform DNA. The sequence is that of Holliday junction branch migration complex subunit RuvB from Caulobacter vibrioides (strain ATCC 19089 / CIP 103742 / CB 15) (Caulobacter crescentus).